The primary structure comprises 290 residues: Mitochondrial dicarboxylate carrier (290 aa).

Solcar repeat units follow at residues 6 to 90 (TKRL…VKKQ), 101 to 188 (QKAL…IKQT), and 197 to 281 (DNLQ…LRLK). Helical transmembrane passes span 12-32 (WYFG…LDLL), 65-84 (GVSA…FGIY), and 103-123 (ALLA…GDLV). Residue lysine 159 is modified to N6-acetyllysine. The next 3 helical transmembrane spans lie at 163–182 (GATM…LSFY), 203–223 (FASS…LDVM), and 256–276 (GFIP…IFFE).

This sequence belongs to the mitochondrial carrier (TC 2.A.29) family.

It is found in the mitochondrion inner membrane. It catalyses the reaction (S)-malate(in) + phosphate(out) = (S)-malate(out) + phosphate(in). The enzyme catalyses malonate(out) + (S)-malate(in) = malonate(in) + (S)-malate(out). The catalysed reaction is (S)-malate(in) + succinate(out) = (S)-malate(out) + succinate(in). It carries out the reaction (S)-malate(in) + sulfate(out) = (S)-malate(out) + sulfate(in). It catalyses the reaction 2 thiosulfate(out) + (S)-malate(in) = 2 thiosulfate(in) + (S)-malate(out). The enzyme catalyses malonate(out) + phosphate(in) = malonate(in) + phosphate(out). The catalysed reaction is succinate(out) + phosphate(in) = succinate(in) + phosphate(out). It carries out the reaction sulfate(out) + phosphate(in) = sulfate(in) + phosphate(out). It catalyses the reaction 2 thiosulfate(out) + phosphate(in) = 2 thiosulfate(in) + phosphate(out). The enzyme catalyses malonate(out) + succinate(in) = malonate(in) + succinate(out). Catalyzes the electroneutral exchange or flux of physiologically important metabolites such as dicarboxylates (malonate, malate, succinate), inorganic sulfur-containing anions, and phosphate, across mitochondrial inner membrane. Plays an important role in gluconeogenesis, fatty acid metabolism, urea synthesis, and sulfur metabolism, by supplying the substrates for the different metabolic processes. This is Mitochondrial dicarboxylate carrier from Caenorhabditis elegans.